Reading from the N-terminus, the 1057-residue chain is MPKRNDIKTILVIGSGPIIIGQAAEFDYAGTQACLALKEEGYKVILVNSNPATIMTDTEIADKVYIEPLTLDFVSRIIRKEQPDALLPTLGGQTGLNMAVQLHEAGILEENNVTLLGTKLSSIEQAEDRDLFRNLMNELNEPVPESDIVNTVQQAIDFATSIGYPVIVRPAFTMGGTGGGICHDEKELVEIVTNGLKYSPVTQCLIEKSIAGYKEIEYEVMRDSNDNAIVVCNMENIDPVGIHTGDSIVVAPSQTLTDKEYHMLRDVSLKIIRALGIEGGCNVQLALDPHSFNYYIIEVNPRVSRSSALASKATGYPIAKLAAKIAVGLTLDEMMNPVTGTSYAAFEPALDYVVSKIPRFPFDKFEKGERVLGTQMKATGEVMAIGRTYEESLLKAIRSLEYGVHHLGLPNGEAFELDFIKQRIGEQDDERLFFIGEAIRRGVTLEEIHEMTQIDYFFLNKFQHIIDIEHDLKDNVGDIDHLIWAKKYGFSDKVIAHRWNMTEKEIYDIRHENHILPVYKMVDTCASEFESNTPYFYGTYETENESIRSDKKKVVVLGSGPIRIGQGVEFDYATVHAVWAIREAGYEAIIINNNPETVSTDFSISDKLYFEPLTEEDVMNIINLEQPEGVVVQFGGQTAINLAEKLTKYGVKVLGTSLENLDRAEDRKEFEALMQRIEIPQPLGKTATSVEEAVANADFIGYPVLVRPSYVLGGRAMEIVYNEEELINYMTQAVKASPEHPVLIDRYLTGKEIEVDAICDGETVVIPGIMEHIERAGVHSGDSIAVYPPQTLTEKQIATLEDYTKRLAHGLEIKGLLNIQYVISNDEVFVLEVNPRASRTVPFLSKITDVPMANLAMKAILGESLISKGYKDGLVPYKEGVYVKAPVFSFSKLKNVDITLGPEMKSTGEVMGKDITLEKALYKGLVASGLQVKDHGTVLITVADKDKAEALGLAKRFHEVGYRIMATSGTAKLLKENDIPVVEVSKIGNEFNLLDVIRDGHVQIVINTMTKGKQIERDGFQIRRDSVDNGVPCLTSLDTARALLEVIESMTFNMNQM.

Positions 1 to 401 are carboxyphosphate synthetic domain; sequence MPKRNDIKTI…SLLKAIRSLE (401 aa). The ATP site is built by R129, R169, G175, G176, K208, I210, E215, G241, I242, H243, Q284, and E298. Residues 133 to 327 enclose the ATP-grasp 1 domain; the sequence is RNLMNELNEP…IAKLAAKIAV (195 aa). Residues Q284, E298, and N300 each coordinate Mg(2+). 3 residues coordinate Mn(2+): Q284, E298, and N300. Residues 402-546 are oligomerization domain; sequence YGVHHLGLPN…YGTYETENES (145 aa). Residues 547-929 form a carbamoyl phosphate synthetic domain region; it reads IRSDKKKVVV…ALYKGLVASG (383 aa). In terms of domain architecture, ATP-grasp 2 spans 671–861; sequence EALMQRIEIP…MANLAMKAIL (191 aa). ATP-binding residues include R707, R746, L748, E752, G777, V778, H779, S780, Q820, and E832. Residues Q820, E832, and N834 each coordinate Mg(2+). Mn(2+)-binding residues include Q820, E832, and N834. Residues 930 to 1057 enclose the MGS-like domain; sequence LQVKDHGTVL…ESMTFNMNQM (128 aa). Residues 930–1057 form an allosteric domain region; that stretch reads LQVKDHGTVL…ESMTFNMNQM (128 aa).

The protein belongs to the CarB family. Composed of two chains; the small (or glutamine) chain promotes the hydrolysis of glutamine to ammonia, which is used by the large (or ammonia) chain to synthesize carbamoyl phosphate. Tetramer of heterodimers (alpha,beta)4. The cofactor is Mg(2+). It depends on Mn(2+) as a cofactor.

It carries out the reaction hydrogencarbonate + L-glutamine + 2 ATP + H2O = carbamoyl phosphate + L-glutamate + 2 ADP + phosphate + 2 H(+). It catalyses the reaction hydrogencarbonate + NH4(+) + 2 ATP = carbamoyl phosphate + 2 ADP + phosphate + 2 H(+). It participates in amino-acid biosynthesis; L-arginine biosynthesis; carbamoyl phosphate from bicarbonate: step 1/1. It functions in the pathway pyrimidine metabolism; UMP biosynthesis via de novo pathway; (S)-dihydroorotate from bicarbonate: step 1/3. Functionally, large subunit of the glutamine-dependent carbamoyl phosphate synthetase (CPSase). CPSase catalyzes the formation of carbamoyl phosphate from the ammonia moiety of glutamine, carbonate, and phosphate donated by ATP, constituting the first step of 2 biosynthetic pathways, one leading to arginine and/or urea and the other to pyrimidine nucleotides. The large subunit (synthetase) binds the substrates ammonia (free or transferred from glutamine from the small subunit), hydrogencarbonate and ATP and carries out an ATP-coupled ligase reaction, activating hydrogencarbonate by forming carboxy phosphate which reacts with ammonia to form carbamoyl phosphate. In Macrococcus caseolyticus (strain JCSC5402) (Macrococcoides caseolyticum), this protein is Carbamoyl phosphate synthase large chain.